A 308-amino-acid chain; its full sequence is MRLAFLGTPDFAVQALAEIVEAGHEVACVYSQPPAPRGRGHELRPSPVHAYAESRGIPVRTPASMRDPAEIEAFRALGLDAAVVVAFGQILPREVLEAPRLGSFNVHASLLPRWRGAAPIQRAIMAGDAVTGVQVMRMTEGLDEGPVLSTATVRIDALETAATLHDRLAAAGAGLIVETLAQIAAGRAVETPQAEAGVTYAKKIRPKEARIDWTRPGPEVDRKIRGLSPFPGAWFELPTEKGPVRVKALLSAFEDAEGPAGETLDDRLLVGTGHGAVRLLRVQREGRGPQDAEAFLRGTAVPAGVKLS.

109–112 contributes to the (6S)-5,6,7,8-tetrahydrofolate binding site; it reads SLLP.

The protein belongs to the Fmt family.

It carries out the reaction L-methionyl-tRNA(fMet) + (6R)-10-formyltetrahydrofolate = N-formyl-L-methionyl-tRNA(fMet) + (6S)-5,6,7,8-tetrahydrofolate + H(+). Its function is as follows. Attaches a formyl group to the free amino group of methionyl-tRNA(fMet). The formyl group appears to play a dual role in the initiator identity of N-formylmethionyl-tRNA by promoting its recognition by IF2 and preventing the misappropriation of this tRNA by the elongation apparatus. This is Methionyl-tRNA formyltransferase from Phenylobacterium zucineum (strain HLK1).